A 320-amino-acid polypeptide reads, in one-letter code: Probable cell division protein WhiA (320 aa).

The H-T-H motif DNA-binding region spans 276–310 (TLKELGEMVESGKVSKSGVNHRLRKIDELAEKLRA).

Belongs to the WhiA family.

Involved in cell division and chromosome segregation. This Halalkalibacterium halodurans (strain ATCC BAA-125 / DSM 18197 / FERM 7344 / JCM 9153 / C-125) (Bacillus halodurans) protein is Probable cell division protein WhiA.